A 161-amino-acid polypeptide reads, in one-letter code: RNA pyrophosphohydrolase (161 aa).

The Nudix hydrolase domain maps to 12–154 (PYRIGVGMVI…KRKLYKAVIN (143 aa)). Positions 46 to 67 (GGIILGETYSKAVLREMKEEIG) match the Nudix box motif.

It belongs to the Nudix hydrolase family. RppH subfamily. A divalent metal cation is required as a cofactor.

Functionally, accelerates the degradation of transcripts by removing pyrophosphate from the 5'-end of triphosphorylated RNA, leading to a more labile monophosphorylated state that can stimulate subsequent ribonuclease cleavage. The sequence is that of RNA pyrophosphohydrolase from Orientia tsutsugamushi (strain Boryong) (Rickettsia tsutsugamushi).